Here is a 190-residue protein sequence, read N- to C-terminus: Corticoliberin (190 aa).

The N-terminal stretch at 1-24 (MRLPLLVSVGVLLVALLPSPPCRA) is a signal peptide. A propeptide spanning residues 25–147 (LLSRGPIPGA…QEAPAARKRR (123 aa)) is cleaved from the precursor. Disordered stretches follow at residues 33-53 (GARQ…LPQP) and 115-151 (PRRP…SQEP). Residues 41 to 53 (PQPLSFFQPLPQP) are compositionally biased toward low complexity. Alanine 188 is modified (alanine amide).

This sequence belongs to the sauvagine/corticotropin-releasing factor/urotensin I family. As to quaternary structure, interacts (via C-terminus) with CRFR1 (via N-terminal extracellular domain). As to expression, produced by the hypothalamus.

The protein resides in the secreted. Functionally, hormone regulating the release of corticotropin from pituitary gland. Induces NLRP6 in intestinal epithelial cells, hence may influence gut microbiota profile. This chain is Corticoliberin (CRH), found in Ovis aries (Sheep).